We begin with the raw amino-acid sequence, 479 residues long: Ribosomal RNA small subunit methyltransferase F (479 aa).

S-adenosyl-L-methionine is bound by residues 125 to 131 (AAAPGSK), glutamate 149, aspartate 176, and aspartate 194. The active-site Nucleophile is the cysteine 247.

The protein belongs to the class I-like SAM-binding methyltransferase superfamily. RsmB/NOP family.

It is found in the cytoplasm. It carries out the reaction cytidine(1407) in 16S rRNA + S-adenosyl-L-methionine = 5-methylcytidine(1407) in 16S rRNA + S-adenosyl-L-homocysteine + H(+). Functionally, specifically methylates the cytosine at position 1407 (m5C1407) of 16S rRNA. The chain is Ribosomal RNA small subunit methyltransferase F from Salmonella paratyphi A (strain ATCC 9150 / SARB42).